Consider the following 182-residue polypeptide: Probable RNA 2'-phosphotransferase (182 aa).

Belongs to the KptA/TPT1 family.

Removes the 2'-phosphate from RNA via an intermediate in which the phosphate is ADP-ribosylated by NAD followed by a presumed transesterification to release the RNA and generate ADP-ribose 1''-2''-cyclic phosphate (APPR&gt;P). May function as an ADP-ribosylase. The chain is Probable RNA 2'-phosphotransferase from Pseudomonas fluorescens (strain ATCC BAA-477 / NRRL B-23932 / Pf-5).